The sequence spans 635 residues: Extracellular metalloproteinase 1 (635 aa).

The N-terminal stretch at 1 to 19 is a signal peptide; it reads MHGLLLAAGLLSLPLHVLA. The propeptide occupies 20–246; sequence HPQPSTSTSL…VHNVVDYVAH (227 aa). A glycan (N-linked (GlcNAc...) asparagine) is linked at Asn287. Position 430 (His430) interacts with Zn(2+). Glu431 is a catalytic residue. Position 434 (His434) interacts with Zn(2+). 3 N-linked (GlcNAc...) asparagine glycosylation sites follow: Asn475, Asn594, and Asn623.

It belongs to the peptidase M36 family. Requires Zn(2+) as cofactor.

It localises to the secreted. Secreted metalloproteinase probably acting as a virulence factor. The sequence is that of Extracellular metalloproteinase 1 (MEP1) from Trichophyton tonsurans (Scalp ringworm fungus).